Consider the following 568-residue polypeptide: Sphingosine-1-phosphate lyase 1 (568 aa).

Topologically, residues 1–40 are lumenal; it reads MPGTDLLKLKDFEPYLEILESYSTKAKNYVNGYCTKYEPW. The chain crosses the membrane as a helical; Signal-anchor for type III membrane protein span at residues 41–61; the sequence is QLIAWSVLCTLLIVWVYELIF. At 62-568 the chain is on the cytoplasmic side; that stretch reads QPESLWSRFK…NQMNGSPKPR (507 aa). Lys-353 bears the N6-(pyridoxal phosphate)lysine; alternate mark. Position 353 is an N6-acetyllysine; alternate (Lys-353). 3'-nitrotyrosine is present on residues Tyr-356 and Tyr-366. Ser-564 bears the Phosphoserine mark.

Belongs to the group II decarboxylase family. Sphingosine-1-phosphate lyase subfamily. Requires pyridoxal 5'-phosphate as cofactor. As to expression, highest levels are found in liver, small intestine and thymus, followed by kidney, lung, heart, spleen and brain (at protein level). Also detected in stomach, testis and skeletal muscle (at protein level).

The protein localises to the endoplasmic reticulum membrane. The enzyme catalyses sphinganine 1-phosphate = hexadecanal + phosphoethanolamine. The catalysed reaction is sphing-4-enine 1-phosphate = (2E)-hexadecenal + phosphoethanolamine. It participates in lipid metabolism; sphingolipid metabolism. In terms of biological role, cleaves phosphorylated sphingoid bases (PSBs), such as sphingosine-1-phosphate, into fatty aldehydes and phosphoethanolamine. Elevates stress-induced ceramide production and apoptosis. Required for global lipid homeostasis in liver and cholesterol homeostasis in fibroblasts. Involved in the regulation of pro-inflammatory response and neutrophil trafficking. Modulates neuronal autophagy via phosphoethanolamine production which regulates accumulation of aggregate-prone proteins such as APP. Seems to play a role in establishing neuronal contact sites and axonal maintenance. This Mus musculus (Mouse) protein is Sphingosine-1-phosphate lyase 1.